A 427-amino-acid chain; its full sequence is Galactose-3-O-sulfotransferase 3 (427 aa).

Topologically, residues 1 to 19 (MPPIFQRLQQATKMSRRKI) are cytoplasmic. The helical; Signal-anchor for type II membrane protein transmembrane segment at 20–40 (LLLVLGCSTLSLLIHQGAQLS) threads the bilayer. Over 41–427 (WYPKLFPLSC…RPIRALRPGH (387 aa)) the chain is Lumenal. N-linked (GlcNAc...) asparagine glycosylation is found at asparagine 90, asparagine 109, asparagine 176, and asparagine 301. The interval 404 to 427 (MRLRPEPVLDNPPPRPIRALRPGH) is disordered.

Belongs to the galactose-3-O-sulfotransferase family. It depends on Mg(2+) as a cofactor.

The protein resides in the golgi apparatus. It localises to the golgi stack membrane. It participates in protein modification; carbohydrate sulfation. Its function is as follows. Transfers a sulfate to position 3 of non-reducing beta-galactosyl residues in N-glycans and core2-branched O-glycans. Has high activity towards Gal-beta-1,4-GlcNAc, Gal-beta-1,4(Fuc-alpha-1,3)GlcNAc and lower activity towards Gal-beta-1,3(Fuc-alpha-1,4)GlcNAc. The chain is Galactose-3-O-sulfotransferase 3 (GAL3ST3) from Bos taurus (Bovine).